The primary structure comprises 260 residues: Putative ATP-binding protein BruAb2_1123 (260 aa).

In terms of domain architecture, ABC transporter spans 5 to 228; sequence ISFNNVVMRY…DLPYPRTEAI (224 aa). 37 to 44 serves as a coordination point for ATP; sequence GPSGCGKS.

Belongs to the ABC transporter superfamily. As to quaternary structure, the complex is composed of two ATP-binding proteins (BruAb2_1123), two transmembrane proteins (BruAb2_1124) and a solute-binding protein (BruAb2_1122).

It is found in the cell inner membrane. In terms of biological role, probably part of an ABC transporter complex. Probably Responsible for energy coupling to the transport system. This chain is Putative ATP-binding protein BruAb2_1123, found in Brucella abortus biovar 1 (strain 9-941).